The sequence spans 426 residues: Serine--tRNA ligase (426 aa).

233-235 (TAE) contacts L-serine. 264 to 266 (RSE) contributes to the ATP binding site. L-serine is bound at residue Glu-287. ATP is bound at residue 351–354 (EISS). Ser-387 contacts L-serine.

Belongs to the class-II aminoacyl-tRNA synthetase family. Type-1 seryl-tRNA synthetase subfamily. As to quaternary structure, homodimer. The tRNA molecule binds across the dimer.

It is found in the cytoplasm. The catalysed reaction is tRNA(Ser) + L-serine + ATP = L-seryl-tRNA(Ser) + AMP + diphosphate + H(+). It catalyses the reaction tRNA(Sec) + L-serine + ATP = L-seryl-tRNA(Sec) + AMP + diphosphate + H(+). It functions in the pathway aminoacyl-tRNA biosynthesis; selenocysteinyl-tRNA(Sec) biosynthesis; L-seryl-tRNA(Sec) from L-serine and tRNA(Sec): step 1/1. In terms of biological role, catalyzes the attachment of serine to tRNA(Ser). Is also able to aminoacylate tRNA(Sec) with serine, to form the misacylated tRNA L-seryl-tRNA(Sec), which will be further converted into selenocysteinyl-tRNA(Sec). In Pseudomonas fluorescens (strain Pf0-1), this protein is Serine--tRNA ligase.